A 303-amino-acid polypeptide reads, in one-letter code: tRNA pseudouridine synthase B (303 aa).

Catalysis depends on Asp47, which acts as the Nucleophile.

It belongs to the pseudouridine synthase TruB family. Type 1 subfamily.

It carries out the reaction uridine(55) in tRNA = pseudouridine(55) in tRNA. Responsible for synthesis of pseudouridine from uracil-55 in the psi GC loop of transfer RNAs. The protein is tRNA pseudouridine synthase B of Legionella pneumophila (strain Lens).